Reading from the N-terminus, the 195-residue chain is Large ribosomal subunit protein bL27c (195 aa).

The N-terminal 60 residues, 1–60, are a transit peptide targeting the chloroplast; sequence MASMAFTLVGAFKGMSLSSPCHSSSSASFLRADRVSLSVGGGVGMGVPMTMPVRRLTIQM.

Belongs to the bacterial ribosomal protein bL27 family. As to quaternary structure, part of the 50S ribosomal subunit.

It is found in the plastid. The protein resides in the chloroplast. The protein is Large ribosomal subunit protein bL27c (RPL27) of Oryza sativa subsp. japonica (Rice).